The chain runs to 319 residues: Probable carboxylesterase 5 (319 aa).

Residue methionine 1 is modified to N-acetylmethionine. The Involved in the stabilization of the negatively charged intermediate by the formation of the oxyanion hole motif lies at 79 to 81 (HGG). Catalysis depends on residues serine 163, aspartate 262, and histidine 294.

Belongs to the 'GDXG' lipolytic enzyme family. In terms of tissue distribution, expressed in roots, leaves, stems, flowers and siliques.

The enzyme catalyses a carboxylic ester + H2O = an alcohol + a carboxylate + H(+). Its function is as follows. Carboxylesterase acting on esters with varying acyl chain length. The sequence is that of Probable carboxylesterase 5 (CXE5) from Arabidopsis thaliana (Mouse-ear cress).